The primary structure comprises 358 residues: Phosphoribosylformylglycinamidine cyclo-ligase (358 aa).

This sequence belongs to the AIR synthase family.

It is found in the cytoplasm. The enzyme catalyses 2-formamido-N(1)-(5-O-phospho-beta-D-ribosyl)acetamidine + ATP = 5-amino-1-(5-phospho-beta-D-ribosyl)imidazole + ADP + phosphate + H(+). Its pathway is purine metabolism; IMP biosynthesis via de novo pathway; 5-amino-1-(5-phospho-D-ribosyl)imidazole from N(2)-formyl-N(1)-(5-phospho-D-ribosyl)glycinamide: step 2/2. The sequence is that of Phosphoribosylformylglycinamidine cyclo-ligase from Chromohalobacter salexigens (strain ATCC BAA-138 / DSM 3043 / CIP 106854 / NCIMB 13768 / 1H11).